Here is a 268-residue protein sequence, read N- to C-terminus: Phosphate import ATP-binding protein PstB (268 aa).

In terms of domain architecture, ABC transporter spans 22-263; the sequence is LAVRNLNFYY…PKQQQTQDYI (242 aa). 54 to 61 is an ATP binding site; the sequence is GPSGCGKS.

The protein belongs to the ABC transporter superfamily. Phosphate importer (TC 3.A.1.7) family. In terms of assembly, the complex is composed of two ATP-binding proteins (PstB), two transmembrane proteins (PstC and PstA) and a solute-binding protein (PstS).

Its subcellular location is the cell inner membrane. The catalysed reaction is phosphate(out) + ATP + H2O = ADP + 2 phosphate(in) + H(+). Its function is as follows. Part of the ABC transporter complex PstSACB involved in phosphate import. Responsible for energy coupling to the transport system. This Gluconobacter oxydans (strain 621H) (Gluconobacter suboxydans) protein is Phosphate import ATP-binding protein PstB.